The primary structure comprises 1212 residues: MVDVNRFKSMQITLASPTKVRSWSYGEVKKPETINYRTLKPEREGLFDEVIFGPTKDWECACGKYKRIRYKGIVCDRCGVEVTRAKVRRERMGHIELKAPVSHIWYFKGIPSRMGLTLDMSPRALEEVIYFAAYVVIDPKETPLEPKSLLTEREYREKLQEYGHGSFVAKMGAEAIQDLLKQVDLEAEIAELKEELKTATGQKRFKAVRRLDVLDAFYKSGNKPEWMVLNILPVLPPDLRPMVQLDGGRFAASDLNDLYRRVINRNNRLARLLELGAPGIIVQNEKRMLQEAVDALIDNGRRGRPITGPGSRPLKSLSHMLKGKQGRFRQNLLGKRVDFSGRSVIAVGPTLKMYQCGVPRLMAIELFKPFVMREIVAREYAGNVKAAKRMVERGDERIWDILEDVIKEHPVLLNRAPTLHRLGIQAFEPVLIDGKALRLHPLVCEAYNADFDGDQMAIHVPLSEEAQAEARLLLLAAEHILNPKDGKPVVTPSQDMVLGNYYLTMEDEGREGEGMIFKDIDEAVMAYHNGYVHLHSRVGIAVDSMPDKPWKENQLHKILVTTVGKILFNSIIPSEIPYLQETTNENLTDSTPDKYFLEPGQDIQTVIDSLEINAPFKKKHLGNIIAEIFKRLRTTETSAFLDRLKDLGYYYSTLAGLTVGIADIPVIDNKQEIIDAAHHRVEEINKAFRRGLMTEDDRYVAVTTTWREAKDALEKRLIETQDPKNPIVMMMDSGARGNISNFSQLAGMRGLMAAPNGRIMELPILSNFREGLSVLEMFFSTHGARKGMTDTALKTADSGYLTRRLVDVAQDVIIREDDCGTDRGLVIRAITDGKEVTETLEERLFGRYTKKSVKHPETGEVIVGPDTLITEDMAAAIVNAGVEEVTIRSVFTCKTRHGVCRHCYGINLATGDAVEVGEAVGTIAAQSIGEPGTQLTMRTFHTGGVASNTDITQGLPRIQEIFEARNPKGEAVITEVKGTVIEIEEDAATRTKKVFVQGKTGMGEYVVPFTARMKVEVGDEVHRGEALTEGSIQPKRLLEVRDTLSVETYLLAEVQKVYRSQGVEIGDKHVEVMVRQMLRKVRVMDPGDTDLLPGTLMDISDFTDANKDIVISGGVPATSRPVLLGITKASLETNSFLSAASFQETTRVLTDAAIRGKKDHLIGLKENVIIGKIIPAGTGMARYRNIEPLAVNEVEVIENIAVDEAIVESSED.

4 residues coordinate Zn(2+): Cys-60, Cys-62, Cys-75, and Cys-78. Mg(2+) is bound by residues Asp-450, Asp-452, and Asp-454. Zn(2+) is bound by residues Cys-819, Cys-893, Cys-900, and Cys-903.

This sequence belongs to the RNA polymerase beta' chain family. As to quaternary structure, the RNAP catalytic core consists of 2 alpha, 1 beta, 1 beta' and 1 omega subunit. When a sigma factor is associated with the core the holoenzyme is formed, which can initiate transcription. Mg(2+) is required as a cofactor. It depends on Zn(2+) as a cofactor.

The enzyme catalyses RNA(n) + a ribonucleoside 5'-triphosphate = RNA(n+1) + diphosphate. Functionally, DNA-dependent RNA polymerase catalyzes the transcription of DNA into RNA using the four ribonucleoside triphosphates as substrates. The protein is DNA-directed RNA polymerase subunit beta' of Streptococcus thermophilus (strain ATCC BAA-491 / LMD-9).